Here is a 446-residue protein sequence, read N- to C-terminus: Putative diacyglycerol O-acyltransferase MT3481 (446 aa).

The active-site Proton acceptor is H129. The tract at residues 425–446 (SRALPSAARRGRPSVPTARARH) is disordered.

The protein belongs to the long-chain O-acyltransferase family.

It carries out the reaction an acyl-CoA + a 1,2-diacyl-sn-glycerol = a triacyl-sn-glycerol + CoA. Its pathway is glycerolipid metabolism; triacylglycerol biosynthesis. The chain is Putative diacyglycerol O-acyltransferase MT3481 from Mycobacterium tuberculosis (strain CDC 1551 / Oshkosh).